A 112-amino-acid chain; its full sequence is uncharacterized protein (112 aa).

The N-terminal stretch at 1-25 (MKGTKLAVVVGMTVAAVSLAAPAQA) is a signal peptide.

This is an uncharacterized protein from Mycobacterium tuberculosis (strain CDC 1551 / Oshkosh).